The following is a 345-amino-acid chain: UPF0284 protein STK_21430 (345 aa).

This sequence belongs to the UPF0284 family.

This is UPF0284 protein STK_21430 from Sulfurisphaera tokodaii (strain DSM 16993 / JCM 10545 / NBRC 100140 / 7) (Sulfolobus tokodaii).